Reading from the N-terminus, the 286-residue chain is MTQHDPVARQASISEEMHISAEFDAEYEIERRVAFLANYLRSSGLKTYVLGISGGVDSTTAGRLAQLAVERLRAEHYDAHFVAIRLPYGEQKDEADAQQALRFIRADENLTIDIKPAADAMLAALDQSGLLYKDESQQDFVHGNIKARQRMIAQYAVASARAGVVIGTDHAAESVMGFFTKFGDGGADVLPLTGLNKRRVRAVSKALGAPEALAHKVPTADLEMLRPQRPDEDAYGIPYDAIDDFLERKPVSDAARETILRFHEVTRHKRALPYTPFDWPVQTSGD.

An ATP-binding site is contributed by 51 to 58 (GISGGVDS). Asp57 provides a ligand contact to Mg(2+). Arg148 contacts deamido-NAD(+). Position 168 (Thr168) interacts with ATP. Glu173 is a binding site for Mg(2+). Residues Lys181 and Asp188 each contribute to the deamido-NAD(+) site. ATP contacts are provided by Lys197 and Thr219. 268-269 (HK) serves as a coordination point for deamido-NAD(+).

The protein belongs to the NAD synthetase family. As to quaternary structure, homodimer.

It carries out the reaction deamido-NAD(+) + NH4(+) + ATP = AMP + diphosphate + NAD(+) + H(+). Its pathway is cofactor biosynthesis; NAD(+) biosynthesis; NAD(+) from deamido-NAD(+) (ammonia route): step 1/1. In terms of biological role, catalyzes the ATP-dependent amidation of deamido-NAD to form NAD. Uses ammonia as a nitrogen source. The polypeptide is NH(3)-dependent NAD(+) synthetase (Paraburkholderia phytofirmans (strain DSM 17436 / LMG 22146 / PsJN) (Burkholderia phytofirmans)).